An 873-amino-acid chain; its full sequence is Sister chromatid cohesion protein PDS5 homolog C (873 aa).

HEAT repeat units follow at residues 53-92, 99-136, 149-187, and 189-227; these read NALT…ITAP, DQMK…VAKV, ALLI…ESED, and PSEM…KLKT. Positions 266-301 are enriched in basic and acidic residues; the sequence is NEKEDSQGHIKRETEVEKAAEISTPERTDAPKDESG. Disordered stretches follow at residues 266-611 and 658-873; these read NEKE…LVGS and SPLD…KRKR. The residue at position 289 (T289) is a Phosphothreonine. Residues 303–319 show a composition bias toward polar residues; sequence SGVSNGVAQQNDSSVDT. Positions 320–334 are enriched in basic and acidic residues; it reads DSMKKQDDTGAKDEP. Polar residues predominate over residues 336–348; sequence QLDNPRNTDLNNT. Composition is skewed to basic and acidic residues over residues 349-365 and 373-394; these read TEEK…KENE and DLSK…DSKD. Polar residues-rich tracts occupy residues 400–411 and 418–438; these read PVDSSVTAATSS and SVQI…SSPS. Basic and acidic residues predominate over residues 456-466; the sequence is KKKESSTEEVK. Positions 494–510 are enriched in low complexity; it reads KVASSSKTKPTVPPSKK. 2 stretches are compositionally biased toward basic and acidic residues: residues 511–526 and 535–555; these read STSE…KKVV and TKPK…EESL. Residues 661-681 show a composition bias toward acidic residues; sequence DESELSQDEEAADQTGQEEDA. The span at 701 to 725 shows a compositional bias: low complexity; sequence SSAKKGSGAGSSKAKATPASKSSKT. Residues 726–746 show a composition bias toward basic and acidic residues; that stretch reads SQDDKTASKSKDSKEASREEE. Over residues 747–757 the composition is skewed to acidic residues; sequence ASSEEESEEEE. Low complexity-rich tracts occupy residues 795-814 and 822-831; these read KATT…PAKS and KSGSASTPAS. A compositionally biased stretch (basic and acidic residues) spans 844–853; sequence ETPKEPEPAT. The segment covering 854–866 has biased composition (low complexity); sequence KAKSGKSQGSQSK.

The protein belongs to the PDS5 family. Interacts with the cohesin complex.

It localises to the nucleus. Functionally, cohesin cofactor dispensable during the meiotic division but playing an important role in DNA repair by homologous recombination (HR) probably by helping SMC5/SMC6 complex. Regulator of sister chromatid cohesion in mitosis which may stabilize cohesin complex association with chromatin. May couple sister chromatid cohesion during mitosis to DNA replication. Cohesion ensures that chromosome partitioning is accurate in both meiotic and mitotic cells and plays an important role in DNA repair. The sequence is that of Sister chromatid cohesion protein PDS5 homolog C from Arabidopsis thaliana (Mouse-ear cress).